Reading from the N-terminus, the 576-residue chain is Glutamine-dependent NAD(+) synthetase (576 aa).

The CN hydrolase domain occupies 4 to 246 (LRVTLAQLNP…EEIITVDLDL (243 aa)). The active-site Proton acceptor; for glutaminase activity is the Glu44. Lys112 acts as the For glutaminase activity in catalysis. Position 118 (Tyr118) interacts with L-glutamine. Residue Cys148 is the Nucleophile; for glutaminase activity of the active site. L-glutamine contacts are provided by Ser176 and Lys182. Residues 292 to 576 (PVREEEMFRA…PITNRFKEPL (285 aa)) form a ligase region. Position 321 to 328 (321 to 328 (GLSGGMDS)) interacts with ATP. Asn404 is a deamido-NAD(+) binding site. Thr428 is a binding site for ATP. Positions 433 and 545 each coordinate deamido-NAD(+).

It in the C-terminal section; belongs to the NAD synthetase family.

The catalysed reaction is deamido-NAD(+) + L-glutamine + ATP + H2O = L-glutamate + AMP + diphosphate + NAD(+) + H(+). Its pathway is cofactor biosynthesis; NAD(+) biosynthesis; NAD(+) from deamido-NAD(+) (L-Gln route): step 1/1. Catalyzes the ATP-dependent amidation of deamido-NAD to form NAD. Uses L-glutamine as a nitrogen source. In Thermotoga maritima (strain ATCC 43589 / DSM 3109 / JCM 10099 / NBRC 100826 / MSB8), this protein is Glutamine-dependent NAD(+) synthetase (nadE2).